The primary structure comprises 642 residues: Mini-chromosome maintenance complex-binding protein (642 aa).

Polar residues predominate over residues 151–161 (ARVSPSTSYTP). The interval 151–197 (ARVSPSTSYTPSRHKRSYEDDDDMDLQPNKQKDQHAGARQAGSVGGL) is disordered. A Phosphoserine modification is found at Ser154. Thr160 bears the Phosphothreonine mark. Ser167 and Ser298 each carry phosphoserine.

The protein belongs to the MCMBP family. In terms of assembly, interacts with the MCM complex: associates with the MCM3-7 complex which lacks MCM2, while it does not interact with the MCM complex when MCM2 is present (MCM2-7 complex). Interacts with the RPA complex, when composed of all RPA1, RPA2 and RPA3 components, but not with RPA1 or RPA2 alone.

The protein localises to the nucleus. Associated component of the MCM complex that acts as a regulator of DNA replication. Binds to the MCM complex during late S phase and promotes the disassembly of the MCM complex from chromatin, thereby acting as a key regulator of pre-replication complex (pre-RC) unloading from replicated DNA. Can dissociate the MCM complex without addition of ATP; probably acts by destabilizing interactions of each individual subunits of the MCM complex. Required for sister chromatid cohesion. This chain is Mini-chromosome maintenance complex-binding protein (MCMBP), found in Homo sapiens (Human).